A 116-amino-acid polypeptide reads, in one-letter code: Dynein light chain Tctex-type 3 (116 aa).

Y4 carries the post-translational modification 3'-nitrotyrosine.

Belongs to the dynein light chain Tctex-type family. In terms of assembly, homodimer. The cytoplasmic dynein 1 complex consists of two catalytic heavy chains (HCs) and a number of non-catalytic subunits presented by intermediate chains (ICs), light intermediate chains (LICs) and light chains (LCs); the composition seems to vary in respect to the IC, LIC and LC composition. The heavy chain homodimer serves as a scaffold for the probable homodimeric assembly of the respective non-catalytic subunits. The ICs and LICs bind directly to the HC dimer and the LCs assemble on the IC dimer. DYNLT1 and DYNLT3 compete for association with dynein IC (DYNC1I1 or DYNC1I2). Self-associates. Interacts with DYNC1I1 and DYNC1I2. Interacts with BUB3. Interacts with SATB1 in nucleus to form complex with matrix attachment regions (MARs) of DNA.

The protein localises to the nucleus. It localises to the cytoplasm. Its subcellular location is the cytoskeleton. The protein resides in the chromosome. It is found in the centromere. The protein localises to the kinetochore. Acts as one of several non-catalytic accessory components of the cytoplasmic dynein 1 complex that are thought to be involved in linking dynein to cargos and to adapter proteins that regulate dynein function. Cytoplasmic dynein 1 acts as a motor for the intracellular retrograde motility of vesicles and organelles along microtubules. Probably binds BUB3 as part of transport cargo. Required for the efficient progression through mitosis. This is Dynein light chain Tctex-type 3 (DYNLT3) from Canis lupus familiaris (Dog).